The chain runs to 103 residues: Protein translation factor SUI1 homolog (103 aa).

It belongs to the SUI1 family.

This is Protein translation factor SUI1 homolog from Methanocaldococcus jannaschii (strain ATCC 43067 / DSM 2661 / JAL-1 / JCM 10045 / NBRC 100440) (Methanococcus jannaschii).